We begin with the raw amino-acid sequence, 1247 residues long: SAM and SH3 domain-containing protein 1 (1247 aa).

The segment at 1–39 (MEDAGAAGPGPEPEPEPEPEPEPAPEPEPEPKPGAGTSE) is disordered. Residues 13-28 (PEPEPEPEPEPAPEPE) show a composition bias toward acidic residues. Ser-90 carries the post-translational modification Phosphoserine. 3 disordered regions span residues 126–145 (VERK…VGKG), 221–257 (AALD…ESVK), and 316–344 (FFDG…LDTW). Ser-248 carries the post-translational modification Phosphoserine. The segment covering 331–343 (SLTTSPSSSSLDT) has biased composition (low complexity). Ser-407 carries the phosphoserine modification. A disordered region spans residues 449–573 (SLGKKVKSVK…DFTPSPYDTD (125 aa)). Low complexity-rich tracts occupy residues 468-484 (KYSS…DGMP) and 505-523 (GGSV…SMSG). Residues 524–536 (QTVSTTDSSTSNR) show a composition bias toward polar residues. The region spanning 554–615 (PFCGRARVHT…KFIYVDVLSE (62 aa)) is the SH3 domain. The residue at position 614 (Ser-614) is a Phosphoserine. Disordered regions lie at residues 616–639 (DEEK…KSVE) and 713–810 (DSQG…LNKN). The segment covering 622-631 (RPTRRRRKGR) has biased composition (basic residues). The SAM 1 domain maps to 633–697 (PQPKSVEDLL…LTAVELLQEY (65 aa)). The span at 746 to 765 (SAKSSTEPSLKSFSRNQLGN) shows a compositional bias: polar residues. Residues Ser-821 and Ser-839 each carry the phosphoserine modification. Disordered stretches follow at residues 846–884 (EPGA…PLEQ), 903–946 (PQKL…LART), and 971–1065 (DAEQ…SELP). The segment at 852–860 (DVPTEVTEP) is required for interaction with TRAF6. The residue at position 858 (Thr-858) is a Phosphothreonine. The span at 1050–1060 (GSPPSTRPPPW) shows a compositional bias: pro residues. Residues 1177–1241 (GCISSVSDWL…LSAARLFKLP (65 aa)) enclose the SAM 2 domain.

Interacts with GNAS. Interacts with IQGAP1. Interacts with TRAF6 (via C-terminus); the interaction is LPS-dependent. Interacts with MAP3K7, CHUK and IKBKB. As to expression, expressed ubiquitously, with highest levels in lung, placenta, spleen and thymus. Down-regulated in the majority (74%) of breast tumors in comparison with corresponding normal breast epithelial tissues. Expressed in the epidermis, epidermal keratinocytes, dermal fibroblasts and melanocytes.

Its subcellular location is the cytoplasm. In terms of biological role, is a positive regulator of NF-kappa-B signaling downstream of TLR4 activation. It acts as a scaffold molecule to assemble a molecular complex that includes TRAF6, MAP3K7, CHUK and IKBKB, thereby facilitating NF-kappa-B signaling activation. Regulates TRAF6 and MAP3K7 ubiquitination. Involved in the regulation of cell mobility. Regulates lipolysaccharide (LPS)-induced endothelial cell migration. Is involved in the regulation of skin pigmentation through the control of melanocyte migration in the epidermis. In Homo sapiens (Human), this protein is SAM and SH3 domain-containing protein 1 (SASH1).